A 203-amino-acid polypeptide reads, in one-letter code: Cytochrome c oxidase assembly protein CtaG (203 aa).

Residues 1–19 lie on the Cytoplasmic side of the membrane; it reads MDAGKAERRAGNGRRTDGR. The helical; Signal-anchor for type II membrane protein transmembrane segment at 20-42 threads the bilayer; it reads RHLVVAAACAAFIAAMVGVTYAS. Topologically, residues 43 to 203 are periplasmic; that stretch reads VPLYAMFCAL…AAARASGTGG (161 aa).

It belongs to the COX11/CtaG family.

The protein resides in the cell inner membrane. Exerts its effect at some terminal stage of cytochrome c oxidase synthesis, probably by being involved in the insertion of the copper B into subunit I. The protein is Cytochrome c oxidase assembly protein CtaG of Xanthobacter autotrophicus (strain ATCC BAA-1158 / Py2).